Here is a 23-residue protein sequence, read N- to C-terminus: ATEAQAAINEXPDRVKKDYFYGR.

As to quaternary structure, complex I is composed of about 45 different subunits.

It localises to the mitochondrion inner membrane. It carries out the reaction a ubiquinone + NADH + 5 H(+)(in) = a ubiquinol + NAD(+) + 4 H(+)(out). Transfer of electrons from NADH to the respiratory chain. The immediate electron acceptor for the enzyme is believed to be ubiquinone. This is NADH-ubiquinone oxidoreductase 29 kDa subunit from Solanum tuberosum (Potato).